The sequence spans 438 residues: Ribosomal protein uS12 methylthiotransferase RimO (438 aa).

The 112-residue stretch at 5 to 116 folds into the MTTase N-terminal domain; the sequence is PTIAISHLGC…IVQVIQRVEN (112 aa). Residues cysteine 14, cysteine 50, cysteine 79, cysteine 154, cysteine 158, and cysteine 161 each contribute to the [4Fe-4S] cluster site. Residues 140 to 369 enclose the Radical SAM core domain; it reads TTSEGVAYLR…MQIQQPISLQ (230 aa). Positions 372–438 constitute a TRAM domain; sequence CACIGDIVDV…IYDLYGEVIN (67 aa).

This sequence belongs to the methylthiotransferase family. RimO subfamily. The cofactor is [4Fe-4S] cluster.

It is found in the cytoplasm. The catalysed reaction is L-aspartate(89)-[ribosomal protein uS12]-hydrogen + (sulfur carrier)-SH + AH2 + 2 S-adenosyl-L-methionine = 3-methylsulfanyl-L-aspartate(89)-[ribosomal protein uS12]-hydrogen + (sulfur carrier)-H + 5'-deoxyadenosine + L-methionine + A + S-adenosyl-L-homocysteine + 2 H(+). Functionally, catalyzes the methylthiolation of an aspartic acid residue of ribosomal protein uS12. In Gloeothece citriformis (strain PCC 7424) (Cyanothece sp. (strain PCC 7424)), this protein is Ribosomal protein uS12 methylthiotransferase RimO.